The sequence spans 619 residues: Cationic amino acid transporter 3 (619 aa).

The Cytoplasmic segment spans residues 1 to 36 (MLWQALRRFGQKLVRRRLLELGMGETRLARCLSTLD). The chain crosses the membrane as a helical span at residues 37–57 (LVALGVGSTLGAGVYVLAGEV). The Extracellular segment spans residues 58-61 (AKEK). The chain crosses the membrane as a helical span at residues 62 to 82 (AGPSIVICFLVAALSSVLAGL). Over 83-107 (CYAEFGARVPGSGSAYLYSYVTVGE) the chain is Cytoplasmic. The helical transmembrane segment at 108–128 (LWAFTTGWNLILSYVIGTASV) threads the bilayer. Topologically, residues 129–162 (ARAWSSAFDNLIGNHISQTLKGTILLNMPHVLAE) are extracellular. Residues 163–183 (YPDFFALALVLLLTGLLVLGA) traverse the membrane as a helical segment. The Cytoplasmic portion of the chain corresponds to 184 to 191 (NESGLVTK). Residues 192–212 (VFTGMNLLVLGFVIISGFIKG) form a helical membrane-spanning segment. Residues 213-244 (ELRNWKLTKEDYCLTMSESNGTCSLDSMGSGG) are Extracellular-facing. N-linked (GlcNAc...) asparagine glycosylation occurs at asparagine 232. A helical membrane pass occupies residues 245 to 265 (FMPFGLEGILRGAATCFYAFV). At 266-285 (GFDCIATTGEEAQNPQRSIP) the chain is on the cytoplasmic side. The chain crosses the membrane as a helical span at residues 286–306 (MGIVISLSICFLAYFGVSSAL). The Extracellular portion of the chain corresponds to 307-335 (TLMMPYYKLQPESPLPEAFTYVGWEPARY). A helical membrane pass occupies residues 336 to 356 (LVAIGSLCALSTSLLGSMFPM). Residues 357–382 (PRVIYAMAEDGLLFRVLARVHNGTHT) are Cytoplasmic-facing. Residues 383–403 (PIVATVVSGVIAAFMAFLFEL) form a helical membrane-spanning segment. At 404 to 406 (TDL) the chain is on the extracellular side. A helical membrane pass occupies residues 407–427 (VDLMSIGTLLAYSLVSICVLI). The Cytoplasmic portion of the chain corresponds to 428-475 (LRYQPDQEMKNGEEEVELQEERTLEAEKLTVQALFCQVDSIPTLLSGR). A helical membrane pass occupies residues 476–496 (IVYVCSSLLAVLLTVLCLVLT). At 497-507 (WWTTPLHSGDP) the chain is on the extracellular side. The chain crosses the membrane as a helical span at residues 508-528 (VWVTVVVLILGLILGISGVIW). Residues 529–540 (RQPQNRTPLHFK) lie on the Cytoplasmic side of the membrane. The chain crosses the membrane as a helical span at residues 541–561 (VPVVPLLPLVSIFVNVYLMMQ). Residues 562 to 569 (MTADTWAR) are Extracellular-facing. A helical membrane pass occupies residues 570–590 (FGVWMLIGFAIYFGYGIQHSV). Residues 591 to 619 (EEVKNHQTLPKTRPQTIDLDLTTSCVHSI) lie on the Cytoplasmic side of the membrane. At threonine 606 the chain carries Phosphothreonine. Position 618 is a phosphoserine (serine 618).

This sequence belongs to the amino acid-polyamine-organocation (APC) superfamily. Cationic amino acid transporter (CAT) (TC 2.A.3.3) family. In terms of processing, N-glycosylated. As to expression, highly expressed in brain.

The protein resides in the cell membrane. The catalysed reaction is L-arginine(in) = L-arginine(out). It catalyses the reaction L-lysine(in) = L-lysine(out). It carries out the reaction L-ornithine(in) = L-ornithine(out). With respect to regulation, inhibited by high potassium ions-induced membrane depolarization. Functionally, uniporter that mediates the uptake of cationic L-amino acids such as L-arginine, L-lysine and L-ornithine. The transport is sodium ions- and pH-independent, moderately trans-stimulated and is mediated by passive diffusion. This is Cationic amino acid transporter 3 from Rattus norvegicus (Rat).